Reading from the N-terminus, the 131-residue chain is D-ribose pyranase (131 aa).

Residue histidine 20 is the Proton donor of the active site. Substrate is bound by residues aspartate 28, histidine 98, and 120–122; that span reads YAN.

This sequence belongs to the RbsD / FucU family. RbsD subfamily. As to quaternary structure, homodecamer.

The protein localises to the cytoplasm. The catalysed reaction is beta-D-ribopyranose = beta-D-ribofuranose. It participates in carbohydrate metabolism; D-ribose degradation; D-ribose 5-phosphate from beta-D-ribopyranose: step 1/2. In terms of biological role, catalyzes the interconversion of beta-pyran and beta-furan forms of D-ribose. The chain is D-ribose pyranase from Bacillus cereus (strain AH187).